We begin with the raw amino-acid sequence, 494 residues long: Guanosine-5'-triphosphate,3'-diphosphate pyrophosphatase (494 aa).

This sequence belongs to the GppA/Ppx family. GppA subfamily.

It catalyses the reaction guanosine 3'-diphosphate 5'-triphosphate + H2O = guanosine 3',5'-bis(diphosphate) + phosphate + H(+). Its pathway is purine metabolism; ppGpp biosynthesis; ppGpp from GTP: step 2/2. Its function is as follows. Catalyzes the conversion of pppGpp to ppGpp. Guanosine pentaphosphate (pppGpp) is a cytoplasmic signaling molecule which together with ppGpp controls the 'stringent response', an adaptive process that allows bacteria to respond to amino acid starvation, resulting in the coordinated regulation of numerous cellular activities. The protein is Guanosine-5'-triphosphate,3'-diphosphate pyrophosphatase of Escherichia coli (strain 55989 / EAEC).